A 423-amino-acid chain; its full sequence is Keratin, type I cytoskeletal 18 (423 aa).

Serine 2 is subject to N-acetylserine. A head region spans residues 2-71 (SFTTRSTTFS…GLAGMGGVQT (70 aa)). Phosphoserine occurs at positions 7, 11, 16, and 19. Residues serine 31 and serine 32 each carry the phosphoserine; alternate modification. 2 O-linked (GlcNAc) serine; alternate glycosylation sites follow: serine 31 and serine 32. A Phosphoserine modification is found at serine 35. Tyrosine 37 is modified (phosphotyrosine). At serine 43 the chain carries Phosphoserine. Arginine 46 bears the Omega-N-methylarginine mark. At serine 50 the chain carries Phosphoserine; alternate. An O-linked (GlcNAc) serine; alternate glycan is attached at serine 50. Serine 52 bears the Phosphoserine; by MAPKAPK2 and MAPKAPK3 mark. A phosphoserine mark is found at serine 57 and serine 60. The tract at residues 62 to 366 (GLAGMGGVQT…EALLNIKVKL (305 aa)) is necessary for interaction with PNN. The interval 69-121 (VQTEKETMQDLNDRLASYLDKVKNLETENRRLESKIREYLEKRGPQGVRDWGH) is interaction with TRADD. Residues 72 to 107 (EKETMQDLNDRLASYLDKVKNLETENRRLESKIREY) are coil 1A. The 313-residue stretch at 72–384 (EKETMQDLND…RLLEDGDDFS (313 aa)) folds into the IF rod domain. Lysine 73 is covalently cross-linked (Glycyl lysine isopeptide (Lys-Gly) (interchain with G-Cter in SUMO2)). A Phosphoserine modification is found at serine 85. A linker 1 region spans residues 108 to 125 (LEKRGPQGVRDWGHYFKT). Lysine 124 carries the post-translational modification N6-acetyllysine. Positions 126–217 (IEDLRAQIFA…KNHEEEVQGL (92 aa)) are coil 1B. A phosphoserine mark is found at serine 137 and serine 170. The interval 218-241 (EAQIASSGLTVEVDAPKSQDLSKI) is linker 12. The interaction with DNAJB6 stretch occupies residues 236–384 (QDLSKIMADI…RLLEDGDDFS (149 aa)). Lysine 240 is covalently cross-linked (Glycyl lysine isopeptide (Lys-Gly) (interchain with G-Cter in SUMO2)). Residues 242-380 (MADIRAQYEQ…ATYRRLLEDG (139 aa)) are coil 2. Threonine 295 carries the phosphothreonine modification. Glycyl lysine isopeptide (Lys-Gly) (interchain with G-Cter in SUMO2) cross-links involve residues lysine 363 and lysine 365. A tail region spans residues 381–423 (DDFSLNDALDSSNSMQTVQRTTTRKVVDGKVVSETNDTRVLRH). A phosphoserine mark is found at serine 384, serine 391, serine 392, and serine 394. Threonine 397 bears the Phosphothreonine mark. A Glycyl lysine isopeptide (Lys-Gly) (interchain with G-Cter in SUMO2) cross-link involves residue lysine 410.

The protein belongs to the intermediate filament family. Heterotetramer of two type I and two type II keratins. KRT18 associates with KRT8. Interacts with PNN and mutated CFTR. Interacts with YWHAE, YWHAH and YWHAZ only when phosphorylated. Interacts with DNAJB6, TCHP and TRADD. Interacts with the thrombin-antithrombin complex. Interacts with FAM83H. Interacts with EPPK1. Interacts with PKP1 and PKP2. Post-translationally, phosphorylation increases by IL-6. Proteolytically cleaved by caspases during epithelial cell apoptosis. Cleavage occurs at Asp-231 by either caspase-3, caspase-6 or caspase-7. In terms of processing, dephosphorylated by ethanol. Post-translationally, O-GlcNAcylation increases solubility, and decreases stability by inducing proteasomal degradation. In terms of tissue distribution, expressed on the plasma membrane of hepatocytes and in the narrow apical portions of supporting cells in the vomeronasal sensory epithelium. Detected in the type III alveolar cells of the lung, in the proliferative crypt epithelium of the small intestine and in the older intragemmal cells of the tongue.

It localises to the nucleus matrix. The protein localises to the cytoplasm. It is found in the perinuclear region. The protein resides in the nucleus. Its subcellular location is the nucleolus. Its function is as follows. When phosphorylated, plays a role in filament reorganization. Involved in the delivery of mutated CFTR to the plasma membrane. Together with KRT8, is involved in interleukin-6 (IL-6)-mediated barrier protection. Involved in the uptake of thrombin-antithrombin complexes by hepatic cells. The protein is Keratin, type I cytoskeletal 18 of Rattus norvegicus (Rat).